We begin with the raw amino-acid sequence, 405 residues long: Mucosal addressin cell adhesion molecule 1 (405 aa).

Residues 1 to 21 (MESILALLLALALVPYQLSRG) form the signal peptide. 2 consecutive Ig-like domains span residues 22–109 (QSFQ…ILVY) and 110–227 (AFPD…TSPK). At 22 to 364 (QSFQVNPPES…PGQVTPNSSS (343 aa)) the chain is on the extracellular side. Disulfide bonds link C45–C91, C49–C95, and C132–C200. A mucin-like region spans residues 221 to 257 (QSQTSPKPPNTTSAEPYILTSSSTAEAVSTGLNITTL). N-linked (GlcNAc...) asparagine glycans are attached at residues N230 and N253. The tract at residues 255–275 (TTLPSAPPYPKLSPRTLSSEG) is disordered. Residues 258 to 357 (PSAPPYPKLS…EVTNLYVPGQ (100 aa)) form the Ig-like 3 domain. A disulfide bridge links C293 with C341. N-linked (GlcNAc...) asparagine glycosylation occurs at N361. The helical transmembrane segment at 365–385 (TVVLWIGSLVLGLLALVFLAY) threads the bilayer. Residues 386-405 (RLWKCYRPGPRPDTSSCTHL) lie on the Cytoplasmic side of the membrane.

Homodimer. Post-translationally, O-glycosylated; contains syalic acid. The Ser/Thr-rich mucin-like domain may provide possible sites for O-glycosylation. As to expression, highly expressed on high endothelial venules (HEV) of organized intestinal lymphoid tissues like the Peyer patches and mesenteric lymph nodes, and in the lamina propria of the intestine. Some expression found in the spleen, and low levels of expression in the peripheral lymph nodes and the lactating mammary gland. No expression was detected in the liver, kidneys, lungs or in normal brain. Expressed as well in brain endothelioma cells, and mucosal tissues which are in a chronic state of inflammation, such as inflamed pancreas.

It is found in the membrane. In terms of biological role, cell adhesion leukocyte receptor expressed by mucosal venules, helps to direct lymphocyte traffic into mucosal tissues including the Peyer patches and the intestinal lamina propria. It can bind both the integrin alpha-4/beta-7 and L-selectin, regulating both the passage and retention of leukocytes. Both isoform 1 and isoform 2 can adhere to integrin alpha-4/beta-7. Isoform 2, lacking the mucin-like domain, may be specialized in supporting integrin alpha-4/beta-7-dependent adhesion strengthening, independent of L-selectin binding. The chain is Mucosal addressin cell adhesion molecule 1 (Madcam1) from Mus musculus (Mouse).